Here is a 235-residue protein sequence, read N- to C-terminus: Aspartate/glutamate leucyltransferase (235 aa).

It belongs to the R-transferase family. Bpt subfamily.

It localises to the cytoplasm. It catalyses the reaction N-terminal L-glutamyl-[protein] + L-leucyl-tRNA(Leu) = N-terminal L-leucyl-L-glutamyl-[protein] + tRNA(Leu) + H(+). The enzyme catalyses N-terminal L-aspartyl-[protein] + L-leucyl-tRNA(Leu) = N-terminal L-leucyl-L-aspartyl-[protein] + tRNA(Leu) + H(+). Its function is as follows. Functions in the N-end rule pathway of protein degradation where it conjugates Leu from its aminoacyl-tRNA to the N-termini of proteins containing an N-terminal aspartate or glutamate. The polypeptide is Aspartate/glutamate leucyltransferase (Stutzerimonas stutzeri (strain A1501) (Pseudomonas stutzeri)).